A 102-amino-acid polypeptide reads, in one-letter code: Protein CASC2, isoform 3 (102 aa).

As to expression, expressed in normal and neoplastic endometrial tissues.

In terms of biological role, may act as a potential tumor suppressor. This Homo sapiens (Human) protein is Protein CASC2, isoform 3 (CASC2).